A 129-amino-acid chain; its full sequence is Photosystem II extrinsic protein V (129 aa).

Heme c contacts are provided by Cys35, Cys38, His39, and His90.

It belongs to the cytochrome c family. PsbV subfamily. In terms of assembly, PSII is composed of 1 copy each of membrane proteins PsbA, PsbB, PsbC, PsbD, PsbE, PsbF, PsbH, PsbI, PsbJ, PsbK, PsbL, PsbM, PsbT, PsbX, PsbY, PsbZ, Psb30/Ycf12, peripheral proteins PsbO, CyanoQ (PsbQ), PsbU, PsbV and a large number of cofactors. It forms dimeric complexes. Homodimer in crystal structure. The cofactor is heme c.

It localises to the cellular thylakoid membrane. Functionally, one of the extrinsic, lumenal subunits of photosystem II (PSII). PSII is a light-driven water plastoquinone oxidoreductase, using light energy to abstract electrons from H(2)O, generating a proton gradient subsequently used for ATP formation. The extrinsic proteins stabilize the structure of photosystem II oxygen-evolving complex (OEC), the ion environment of oxygen evolution and protect the OEC against heat-induced inactivation. Low-potential cytochrome c that plays a role in the OEC of PSII. The polypeptide is Photosystem II extrinsic protein V (Limnospira maxima (Arthrospira maxima)).